Reading from the N-terminus, the 34-residue chain is Cycloamanide B proprotein (34 aa).

Residues 1-10 (MSDINAARLP) constitute a propeptide that is removed on maturation. A cross-link (cyclopeptide (Ser-Pro)) is located at residues 11–17 (SFFFPIP). Positions 18-34 (CISDDIEMVLTRGESLC) are excised as a propeptide.

The protein belongs to the MSDIN fungal toxin family. Processed by the macrocyclase-peptidase enzyme POPB to yield a cyclic decapeptide. POPB first removes 10 residues from the N-terminus. Conformational trapping of the remaining peptide forces the enzyme to release this intermediate rather than proceed to macrocyclization. The enzyme rebinds the remaining peptide in a different conformation and catalyzes macrocyclization of the N-terminal 7 residues.

Functionally, cyclic heptapeptide that belongs to the MSDIN-like toxin family responsible for a large number of food poisoning cases and deaths. Cycloaminide B is non-toxic to mammals but shows immunosuppressive activity, probably through the inhibition of the action of interleukin-1 and interleukin-2. This is Cycloamanide B proprotein from Amanita phalloides (Death cap).